The following is a 248-amino-acid chain: NH(3)-dependent NAD(+) synthetase (248 aa).

Position 31 to 38 (31 to 38) interacts with ATP; that stretch reads GVSGGVDS. A Mg(2+)-binding site is contributed by Asp-37. Deamido-NAD(+) is bound at residue Arg-114. Thr-134 contributes to the ATP binding site. Glu-139 serves as a coordination point for Mg(2+). 2 residues coordinate deamido-NAD(+): Lys-147 and Asp-154. ATP is bound by residues Lys-163 and Ser-185. 236-237 contributes to the deamido-NAD(+) binding site; it reads HK.

Belongs to the NAD synthetase family. Homodimer.

The catalysed reaction is deamido-NAD(+) + NH4(+) + ATP = AMP + diphosphate + NAD(+) + H(+). It functions in the pathway cofactor biosynthesis; NAD(+) biosynthesis; NAD(+) from deamido-NAD(+) (ammonia route): step 1/1. In terms of biological role, catalyzes the ATP-dependent amidation of deamido-NAD to form NAD. Uses ammonia as a nitrogen source. The chain is NH(3)-dependent NAD(+) synthetase from Methanoregula boonei (strain DSM 21154 / JCM 14090 / 6A8).